We begin with the raw amino-acid sequence, 53 residues long: UPF0391 membrane protein YtjA (53 aa).

2 helical membrane-spanning segments follow: residues 4-24 and 30-48; these read WGII…GGLA and AAKI…SLFM.

The protein belongs to the UPF0391 family.

It localises to the cell membrane. This is UPF0391 membrane protein YtjA from Escherichia coli O6:K15:H31 (strain 536 / UPEC).